A 158-amino-acid chain; its full sequence is uncharacterized protein (158 aa).

The first 22 residues, 1-22 (MKKIPNKLLAVSAFLTITTTYA), serve as a signal peptide directing secretion. The helical transmembrane segment at 120-140 (LTGIIEYDTKFENHYETLVEA) threads the bilayer.

It localises to the cell membrane. This is an uncharacterized protein from Bacillus cereus.